The following is a 123-amino-acid chain: Large ribosomal subunit protein uL24 (123 aa).

Positions 100–123 (RRPDGSTYKAERSVRISRKTGKEI) are disordered.

This sequence belongs to the universal ribosomal protein uL24 family. In terms of assembly, part of the 50S ribosomal subunit.

In terms of biological role, one of two assembly initiator proteins, it binds directly to the 5'-end of the 23S rRNA, where it nucleates assembly of the 50S subunit. Functionally, one of the proteins that surrounds the polypeptide exit tunnel on the outside of the subunit. This is Large ribosomal subunit protein uL24 from Nocardioides sp. (strain ATCC BAA-499 / JS614).